A 507-amino-acid polypeptide reads, in one-letter code: MARIANKAAIDAAWKQVSACSEKTLKQLFEEDSNRLSGLVVETAKLRFDFSKNHLDSQKLTAFKKLLEACDFDARRKALFAGEKINITEDRAVEHMAERGQGAPASVARAKEYHARMRTLIEAIDAGAFGEVKHLLHIGIGGSALGPKLLIDALTRESGRYDVAVVSNVDGQALEEVFKKFNPHKTLIAVASKTFTTAETMLNAESAMEWMKKHGVEDPQGRMIALTANPAKASEMGIDDTRILPFAESIGGRYSLWSSIGFPAALALGWEGFQQLLEGGAAMDRHFLEAAPEKNAPILAAFADQYYSAVRGAQTHGIFAYDERLQLLPFYLQQLEMESNGKRVDLDGNLIDHPSAFITWGGVGTDAQHAVFQLLHQGTRLVPIEFIAAIKADDTLNPVHHKTLLTNAFAQGAALMSGRDNKDPARSYPGDRPSTTILMEELRPAQLGALIAFYEHRTFTNGVLLGINSFDQFGVELGKEMAHAIADHPENSDFDPSTKALIAAALK.

The Proton donor role is filled by glutamate 338. Catalysis depends on residues histidine 369 and lysine 479.

The protein belongs to the GPI family.

It is found in the cytoplasm. It catalyses the reaction alpha-D-glucose 6-phosphate = beta-D-fructose 6-phosphate. The protein operates within carbohydrate biosynthesis; gluconeogenesis. It participates in carbohydrate degradation; glycolysis; D-glyceraldehyde 3-phosphate and glycerone phosphate from D-glucose: step 2/4. Its function is as follows. Provides a gateway for fructose into the Entner-Doudouroff pathway. Functionally, catalyzes the reversible isomerization of glucose-6-phosphate to fructose-6-phosphate. The chain is Glucose-6-phosphate isomerase from Zymomonas mobilis subsp. mobilis (strain ATCC 31821 / ZM4 / CP4).